The following is a 175-amino-acid chain: Cytochrome c homolog (175 aa).

At 1-8 (MSGKELNK) the chain is on the cytoplasmic side. A helical; Signal-anchor transmembrane segment spans residues 9–29 (IVAAILFASLIAMMVGFVANI). The Periplasmic portion of the chain corresponds to 30-175 (LYKPTLELQH…LFLKTYVHDK (146 aa)). Heme c-binding residues include Cys84, Cys87, His88, and Met150.

It belongs to the cytochrome c family. In terms of processing, binds 1 heme c group covalently per subunit.

The protein localises to the cell membrane. Its function is as follows. May be involved in electron transfer from bc1 complex to aa3. This chain is Cytochrome c homolog (cycM), found in Rickettsia conorii (strain ATCC VR-613 / Malish 7).